Here is a 123-residue protein sequence, read N- to C-terminus: Small ribosomal subunit protein uS13 (123 aa).

Positions P97 to K123 are disordered. Positions Q101 to K123 are enriched in basic residues.

Belongs to the universal ribosomal protein uS13 family. As to quaternary structure, part of the 30S ribosomal subunit. Forms a loose heterodimer with protein S19. Forms two bridges to the 50S subunit in the 70S ribosome.

In terms of biological role, located at the top of the head of the 30S subunit, it contacts several helices of the 16S rRNA. In the 70S ribosome it contacts the 23S rRNA (bridge B1a) and protein L5 of the 50S subunit (bridge B1b), connecting the 2 subunits; these bridges are implicated in subunit movement. Contacts the tRNAs in the A and P-sites. This is Small ribosomal subunit protein uS13 from Fervidobacterium nodosum (strain ATCC 35602 / DSM 5306 / Rt17-B1).